The following is a 36-amino-acid chain: Serine protease inhibitor 2 (36 aa).

One can recognise a Pacifastin domain in the interval 1-36 (EISCEPGTTFQDKCNTCRCGKDGKSAAGCTLKACPQ). 3 disulfides stabilise this stretch: C4-C19, C14-C34, and C17-C29.

This sequence belongs to the protease inhibitor I19 family. Expressed in hemolymph.

It is found in the secreted. Functionally, probable serine protease inhibitor. In Melanoplus sanguinipes (Migratory grasshopper), this protein is Serine protease inhibitor 2.